A 92-amino-acid chain; its full sequence is Progonadoliberin-1 (92 aa).

Positions 1–23 (MKPIQKLLAGLILLTWCVEGCSS) are cleaved as a signal peptide. Residue Q24 is modified to Pyrrolidone carboxylic acid. G33 carries the glycine amide modification.

This sequence belongs to the GnRH family. The precursor is cleaved by ACE, which removes the Gly-Lys-Arg peptide at the C-terminus, leading to mature hormone. The mature form of Gonadoliberin-1 is also cleaved and degraded by ACE.

Its subcellular location is the secreted. Stimulates the secretion of gonadotropins; it stimulates the secretion of both luteinizing and follicle-stimulating hormones. This Homo sapiens (Human) protein is Progonadoliberin-1 (GNRH1).